We begin with the raw amino-acid sequence, 233 residues long: UPF0725 protein At4g17990 (233 aa).

The protein belongs to the UPF0725 (EMB2204) family.

This is UPF0725 protein At4g17990 from Arabidopsis thaliana (Mouse-ear cress).